The chain runs to 598 residues: UvrABC system protein C (598 aa).

The GIY-YIG domain occupies D14–I91. A UVR domain is found at D196–M231.

Belongs to the UvrC family. In terms of assembly, interacts with UvrB in an incision complex.

Its subcellular location is the cytoplasm. In terms of biological role, the UvrABC repair system catalyzes the recognition and processing of DNA lesions. UvrC both incises the 5' and 3' sides of the lesion. The N-terminal half is responsible for the 3' incision and the C-terminal half is responsible for the 5' incision. The chain is UvrABC system protein C from Streptococcus pyogenes serotype M12 (strain MGAS2096).